Consider the following 89-residue polypeptide: UPF0237 protein LMOf2365_0562 (89 aa).

The region spanning 4 to 78 (VLTVIGKDNV…EDLQVKIHIQ (75 aa)) is the ACT domain.

The protein belongs to the UPF0237 family.

This chain is UPF0237 protein LMOf2365_0562, found in Listeria monocytogenes serotype 4b (strain F2365).